Consider the following 114-residue polypeptide: ATP-dependent Clp protease adapter protein ClpS (114 aa).

Belongs to the ClpS family. As to quaternary structure, binds to the N-terminal domain of the chaperone ClpA.

Involved in the modulation of the specificity of the ClpAP-mediated ATP-dependent protein degradation. This chain is ATP-dependent Clp protease adapter protein ClpS, found in Bdellovibrio bacteriovorus (strain ATCC 15356 / DSM 50701 / NCIMB 9529 / HD100).